The chain runs to 262 residues: MNRIDKKFEVLKGEGRKALITFITAGDPDIETTYDIVLALEEAGSDIIELGIPYSDPLADGPTIQASSQRALNKGVKIPDIMKIVEKIRLKSDIPLVYLVYYNSIFKYGIQKFLKESKDVGIDGLIIPDLPIEERKDILEEADKYGIYLIPLVAPTSKERIKLITENGKGFVYCVSITGVTGAREDIETDIEEYMKTVSQYTNMPKAIGFGISTPEMAKKLKDFSDGIIVGSALVERIAKGYNKSEMLQEVKSFVSSLKEVL.

Catalysis depends on proton acceptor residues Glu-49 and Asp-60.

The protein belongs to the TrpA family. In terms of assembly, tetramer of two alpha and two beta chains.

The catalysed reaction is (1S,2R)-1-C-(indol-3-yl)glycerol 3-phosphate + L-serine = D-glyceraldehyde 3-phosphate + L-tryptophan + H2O. It participates in amino-acid biosynthesis; L-tryptophan biosynthesis; L-tryptophan from chorismate: step 5/5. The alpha subunit is responsible for the aldol cleavage of indoleglycerol phosphate to indole and glyceraldehyde 3-phosphate. In Thermoanaerobacter sp. (strain X514), this protein is Tryptophan synthase alpha chain.